The following is a 309-amino-acid chain: Aspartate carbamoyltransferase catalytic subunit (309 aa).

Positions 58 and 59 each coordinate carbamoyl phosphate. Lys-86 contributes to the L-aspartate binding site. The carbamoyl phosphate site is built by Arg-108, His-136, and Gln-139. L-aspartate contacts are provided by Arg-169 and Arg-223. Gly-264 and Pro-265 together coordinate carbamoyl phosphate.

The protein belongs to the aspartate/ornithine carbamoyltransferase superfamily. ATCase family. As to quaternary structure, heterododecamer (2C3:3R2) of six catalytic PyrB chains organized as two trimers (C3), and six regulatory PyrI chains organized as three dimers (R2).

It catalyses the reaction carbamoyl phosphate + L-aspartate = N-carbamoyl-L-aspartate + phosphate + H(+). It functions in the pathway pyrimidine metabolism; UMP biosynthesis via de novo pathway; (S)-dihydroorotate from bicarbonate: step 2/3. Catalyzes the condensation of carbamoyl phosphate and aspartate to form carbamoyl aspartate and inorganic phosphate, the committed step in the de novo pyrimidine nucleotide biosynthesis pathway. This is Aspartate carbamoyltransferase catalytic subunit from Pelotomaculum thermopropionicum (strain DSM 13744 / JCM 10971 / SI).